Reading from the N-terminus, the 370-residue chain is GTPase Obg (370 aa).

In terms of domain architecture, Obg spans 1 to 159 (MKFVDEAYID…KKLKLELRVL (159 aa)). The region spanning 160 to 333 (ADVGLLGMPN…LVQAIYQHVA (174 aa)) is the OBG-type G domain. GTP-binding positions include 166–173 (GMPNAGKS), 191–195 (FTTLH), 213–216 (DVPG), 283–286 (NKLD), and 314–316 (SAL). Residues S173 and T193 each contribute to the Mg(2+) site. A disordered region spans residues 346 to 370 (FAEPEADESDDEPRFAPQADDPRFR).

Belongs to the TRAFAC class OBG-HflX-like GTPase superfamily. OBG GTPase family. As to quaternary structure, monomer. The cofactor is Mg(2+).

It localises to the cytoplasm. An essential GTPase which binds GTP, GDP and possibly (p)ppGpp with moderate affinity, with high nucleotide exchange rates and a fairly low GTP hydrolysis rate. Plays a role in control of the cell cycle, stress response, ribosome biogenesis and in those bacteria that undergo differentiation, in morphogenesis control. This is GTPase Obg from Methylibium petroleiphilum (strain ATCC BAA-1232 / LMG 22953 / PM1).